We begin with the raw amino-acid sequence, 420 residues long: LanC-like protein 3 homolog (420 aa).

It belongs to the LanC-like protein family.

The polypeptide is LanC-like protein 3 homolog (Drosophila pseudoobscura pseudoobscura (Fruit fly)).